Reading from the N-terminus, the 158-residue chain is MIRIGHGFDVHAFGEDRPLIIGGVEVPYHTGFIAHSDGDVALHALTDAILGAAALGDIGKLFPDTDMQYKNADSRGLLREAFRQVQEKGYKIGNVDITIIAQAPKMRPHIDAMRAKIAEDILCDIEQVNVKATTTEKLGFTGRQEGIACEAVALLIRQ.

A divalent metal cation contacts are provided by Asp9 and His11. 4-CDP-2-C-methyl-D-erythritol 2-phosphate-binding positions include 9-11 (DVH) and 35-36 (HS). A divalent metal cation is bound at residue His43. 4-CDP-2-C-methyl-D-erythritol 2-phosphate is bound by residues 57–59 (DIG), 62–66 (FPDTD), 133–136 (TTTE), Phe140, and Arg143.

This sequence belongs to the IspF family. Homotrimer. Requires a divalent metal cation as cofactor.

It carries out the reaction 4-CDP-2-C-methyl-D-erythritol 2-phosphate = 2-C-methyl-D-erythritol 2,4-cyclic diphosphate + CMP. The protein operates within isoprenoid biosynthesis; isopentenyl diphosphate biosynthesis via DXP pathway; isopentenyl diphosphate from 1-deoxy-D-xylulose 5-phosphate: step 4/6. In terms of biological role, involved in the biosynthesis of isopentenyl diphosphate (IPP) and dimethylallyl diphosphate (DMAPP), two major building blocks of isoprenoid compounds. Catalyzes the conversion of 4-diphosphocytidyl-2-C-methyl-D-erythritol 2-phosphate (CDP-ME2P) to 2-C-methyl-D-erythritol 2,4-cyclodiphosphate (ME-CPP) with a corresponding release of cytidine 5-monophosphate (CMP). The chain is 2-C-methyl-D-erythritol 2,4-cyclodiphosphate synthase from Haemophilus influenzae (strain 86-028NP).